Consider the following 211-residue polypeptide: 2,3-bisphosphoglycerate-dependent phosphoglycerate mutase (211 aa).

Substrate-binding positions include 9 to 16 (RHGQSDWN), 22 to 23 (TG), Arg61, 88 to 91 (ERDY), Lys99, 115 to 116 (RR), and 159 to 160 (GN). Catalysis depends on His10, which acts as the Tele-phosphohistidine intermediate. The active-site Proton donor/acceptor is the Glu88.

It belongs to the phosphoglycerate mutase family. BPG-dependent PGAM subfamily. In terms of assembly, homodimer.

The enzyme catalyses (2R)-2-phosphoglycerate = (2R)-3-phosphoglycerate. It functions in the pathway carbohydrate degradation; glycolysis; pyruvate from D-glyceraldehyde 3-phosphate: step 3/5. Functionally, catalyzes the interconversion of 2-phosphoglycerate and 3-phosphoglycerate. The sequence is that of 2,3-bisphosphoglycerate-dependent phosphoglycerate mutase from Rhizobium johnstonii (strain DSM 114642 / LMG 32736 / 3841) (Rhizobium leguminosarum bv. viciae).